The primary structure comprises 224 residues: ATP-dependent dethiobiotin synthetase BioD (224 aa).

A Mg(2+)-binding site is contributed by Thr-18. Residue Lys-39 is part of the active site. Residue Ser-43 coordinates substrate. Mg(2+) is bound by residues Asp-56 and Glu-117. Residues Asp-56, 117-120, and 177-178 contribute to the ATP site; these read EGVG and NE.

The protein belongs to the dethiobiotin synthetase family. Homodimer. It depends on Mg(2+) as a cofactor.

Its subcellular location is the cytoplasm. The catalysed reaction is (7R,8S)-7,8-diammoniononanoate + CO2 + ATP = (4R,5S)-dethiobiotin + ADP + phosphate + 3 H(+). Its pathway is cofactor biosynthesis; biotin biosynthesis; biotin from 7,8-diaminononanoate: step 1/2. Functionally, catalyzes a mechanistically unusual reaction, the ATP-dependent insertion of CO2 between the N7 and N8 nitrogen atoms of 7,8-diaminopelargonic acid (DAPA, also called 7,8-diammoniononanoate) to form a ureido ring. The sequence is that of ATP-dependent dethiobiotin synthetase BioD from Xanthomonas euvesicatoria pv. vesicatoria (strain 85-10) (Xanthomonas campestris pv. vesicatoria).